Reading from the N-terminus, the 299-residue chain is tRNA uridine(34) hydroxylase (299 aa).

Residues 132-226 (ASRPVVMLDT…YFEEVGGAHY (95 aa)) enclose the Rhodanese domain. The Cysteine persulfide intermediate role is filled by Cys-186.

It belongs to the TrhO family.

It catalyses the reaction uridine(34) in tRNA + AH2 + O2 = 5-hydroxyuridine(34) in tRNA + A + H2O. Functionally, catalyzes oxygen-dependent 5-hydroxyuridine (ho5U) modification at position 34 in tRNAs. This Burkholderia pseudomallei (strain K96243) protein is tRNA uridine(34) hydroxylase.